The chain runs to 693 residues: Tegument protein UL47 (693 aa).

Disordered stretches follow at residues Met1–Gly32 and Glu48–Gly126. Positions Glu48–Gly57 are enriched in acidic residues. The segment at Glu50–Arg75 is RNA-binding. Positions Arg63–Arg75 match the Nuclear localization signal motif. Positions Arg63–Arg75 are enriched in basic residues. The Nuclear export signal motif lies at Ser647–Glu670.

This sequence belongs to the alphaherpesvirinae HHV-1 UL47 family. As to quaternary structure, interacts with US3 kinase. Interacts with UL31 and UL34; these interactions seem important for efficient virion nuclear egress. Interacts with UL41/VHS. Phosphorylated by US3. This phosphorylation is required for proper nuclear localization.

It is found in the virion tegument. Its subcellular location is the host nucleus. The protein localises to the host cytoplasm. In terms of biological role, tegument protein that can bind to various RNA transcripts. Plays a role in the attenuation of selective viral and cellular mRNA degradation by modulating the activity of host shutoff RNase UL41/VHS. Also plays a role in the primary envelopment of virions in the perinuclear space, probably by interacting with two nuclear egress proteins UL31 and UL34. The polypeptide is Tegument protein UL47 (Homo sapiens (Human)).